The following is a 254-amino-acid chain: Trypsin (254 aa).

The first 16 residues, 1–16 (MLRFIAVFALVNCALA), serve as a signal peptide directing secretion. Positions 17 to 26 (GTLPNDLDGR) are cleaved as a propeptide — activation peptide. In terms of domain architecture, Peptidase S1 spans 27–252 (IVNGVDTTIE…VRSWIEKTAK (226 aa)). Cysteine 53 and cysteine 69 are joined by a disulfide. Catalysis depends on charge relay system residues histidine 68 and aspartate 113. 3 disulfide bridges follow: cysteine 154-cysteine 158, cysteine 178-cysteine 195, and cysteine 204-cysteine 228. Serine 208 (charge relay system) is an active-site residue.

Belongs to the peptidase S1 family.

It is found in the secreted. Its subcellular location is the extracellular space. The catalysed reaction is Preferential cleavage: Arg-|-Xaa, Lys-|-Xaa.. In terms of biological role, involved in digestion of a protein meal. In Sarcophaga bullata (Grey flesh fly), this protein is Trypsin.